We begin with the raw amino-acid sequence, 227 residues long: Cytidylate kinase (227 aa).

Glycine 12–threonine 20 provides a ligand contact to ATP.

This sequence belongs to the cytidylate kinase family. Type 1 subfamily.

It is found in the cytoplasm. It carries out the reaction CMP + ATP = CDP + ADP. It catalyses the reaction dCMP + ATP = dCDP + ADP. The chain is Cytidylate kinase from Citrobacter koseri (strain ATCC BAA-895 / CDC 4225-83 / SGSC4696).